We begin with the raw amino-acid sequence, 522 residues long: MEGSINDARRTNYLVLLRTCYEIYGIYEPLLALFAVYSVAVVVYRLYLHPLARFPGPKLAAATGWYEFYHDVFRGGQYLYEIESMHRKYGPIIRINPHELVVNDPDFYNTVFVAANTRRTDKWSGLEGIGLRGSLAFTRDHDLHRIRRKRYEPFFSRLSVSRIEPIIVDEAKLLAKQLEASSKTGRVIELEHVMSAFTGDVITTLCSEKSPDMIRHPEFGKGWHTSLYNFPSCFRAGAFNSFLEYSTDHINTAKREMLSVDKLEQNNKSSVFRYVLSTDMPQAERDTERLAREAALLFGAGSVTTTRFFSVTIYYTLRNRQIRDRLSAELKDVMAGYPSTLPTWQELDRLPYLHAIVKEGLRYACPFVLSSSLAAWSSLSHKFSSRLSYGVMRHLSRISPDSALHYKQWTIPPGTPVGMSSYSLHTDPETFPEPFKFMPERWLGEYNPKMNRSWVPFTRGSRNCLGMNLAYAQIYWGLAVMFRPGGPRLELYETNESDIRPVLDFLGPLPKSGSRGLRVTVS.

A helical membrane pass occupies residues 23–43 (IYGIYEPLLALFAVYSVAVVV). Residues Asn267 and Asn451 are each glycosylated (N-linked (GlcNAc...) asparagine). A heme-binding site is contributed by Cys464. N-linked (GlcNAc...) asparagine glycosylation is present at Asn495.

This sequence belongs to the cytochrome P450 family. Requires heme as cofactor.

It localises to the membrane. The enzyme catalyses stellata-2,6,19-triene + 3 reduced [NADPH--hemoprotein reductase] + 3 O2 = stellatate + 3 oxidized [NADPH--hemoprotein reductase] + 4 H2O + 4 H(+). The protein operates within secondary metabolite biosynthesis; terpenoid biosynthesis. In terms of biological role, cytochrome P450 monooxygenase; part of the gene cluster that mediates the biosynthesis of the sesterterpene stellatic acid. The first step in the pathway is performed by the stellatatriene synthase that possesses both prenyl transferase and terpene cyclase activity, converting isopentenyl diphosphate and dimethylallyl diphosphate into geranylgeranyl diphosphate (GGDP) and then converting GGDP into stellata-2,6,19-triene. The cytochrome P450 monooxygenase Stl-P450 then catalyzes three successive oxidation reactions on the C-20 methyl group to generate the carboxylic acid of stellatic acid. The sequence is that of Stellatic acid synthase from Emericella variicolor (Aspergillus stellatus).